The chain runs to 440 residues: 3-phosphoshikimate 1-carboxyvinyltransferase (440 aa).

The 3-phosphoshikimate site is built by lysine 25, serine 26, and arginine 30. Lysine 25 contacts phosphoenolpyruvate. Phosphoenolpyruvate-binding residues include glycine 96 and arginine 124. Positions 168, 169, 310, and 337 each coordinate 3-phosphoshikimate. Glutamine 169 is a binding site for phosphoenolpyruvate. Aspartate 310 (proton acceptor) is an active-site residue. Positions 341, 382, and 409 each coordinate phosphoenolpyruvate.

Belongs to the EPSP synthase family. As to quaternary structure, monomer.

It is found in the cytoplasm. The enzyme catalyses 3-phosphoshikimate + phosphoenolpyruvate = 5-O-(1-carboxyvinyl)-3-phosphoshikimate + phosphate. The protein operates within metabolic intermediate biosynthesis; chorismate biosynthesis; chorismate from D-erythrose 4-phosphate and phosphoenolpyruvate: step 6/7. In terms of biological role, catalyzes the transfer of the enolpyruvyl moiety of phosphoenolpyruvate (PEP) to the 5-hydroxyl of shikimate-3-phosphate (S3P) to produce enolpyruvyl shikimate-3-phosphate and inorganic phosphate. The sequence is that of 3-phosphoshikimate 1-carboxyvinyltransferase from Chlamydia trachomatis serovar A (strain ATCC VR-571B / DSM 19440 / HAR-13).